A 187-amino-acid chain; its full sequence is Accessory gene regulator protein B (187 aa).

A run of 5 helical transmembrane segments spans residues 49–69 (IAYILNIFIFTLITNISFYLI), 82–102 (FWCYIESITLFIVLPLLVLHF), 107–127 (TLMMFLALISVGVVIKYAPAA), 143–163 (YFSIIISTILFIITLFVKEPY), and 164–184 (TQFIQLGIIIQAITLLPIYYS).

It belongs to the AgrB family.

The protein resides in the cell membrane. In terms of biological role, essential for the production of a quorum sensing system signal molecule, the autoinducing peptide (AIP). This quorum sensing system is responsible for the regulation of the expression of virulence factor genes. Involved in the proteolytic processing of AgrD, the precursor of AIP. The protein is Accessory gene regulator protein B of Staphylococcus aureus (strain MW2).